Reading from the N-terminus, the 603-residue chain is NADH-ubiquinone oxidoreductase chain 5 (603 aa).

Helical transmembrane passes span 4-24, 38-58, 87-107, 114-134, 140-160, 171-191, 210-230, 241-261, 272-292, 301-320, 325-347, 370-390, 407-429, 457-477, 482-502, 537-557, and 582-602; these read YATMTTLALTSLIPPILTTFI, SIVASTFIISLFPTTMFLCLD, MMFIPVALFVTWSIMEFSLWY, INQFFKYLLIFLITMLILVTA, LFIGWEGVGIMSFLLIGWWYA, AILYNRIGDIGFILALAWFLL, LIPLLGFLLAAAGKSAQLGLH, TPVSALLHSSTMVVAGVFLLI, LAQTLTLCLGAITTLFAAVCA, IVAFSTSSQLGLMVATIGIG, AFLHICTHAFFKAMLFMCSGSII, STSLAIGSLALMGMPFLTGFY, WALSIILIATSLTSAYSTRMILL, LTIGSLFAGFFITNNILPTSV, IPLYLKLTALSITLLGLLTAL, IPYLGLLMSQNLPLLLLDLIW, and GLIKLYFLSFFFPLLLILLLI.

The protein belongs to the complex I subunit 5 family. As to quaternary structure, core subunit of respiratory chain NADH dehydrogenase (Complex I) which is composed of 45 different subunits.

It is found in the mitochondrion inner membrane. It carries out the reaction a ubiquinone + NADH + 5 H(+)(in) = a ubiquinol + NAD(+) + 4 H(+)(out). Functionally, core subunit of the mitochondrial membrane respiratory chain NADH dehydrogenase (Complex I) which catalyzes electron transfer from NADH through the respiratory chain, using ubiquinone as an electron acceptor. Essential for the catalytic activity and assembly of complex I. In Gorilla gorilla gorilla (Western lowland gorilla), this protein is NADH-ubiquinone oxidoreductase chain 5 (MT-ND5).